A 192-amino-acid polypeptide reads, in one-letter code: Adenylate kinase (192 aa).

12–17 (GSGKTT) contributes to the ATP binding site. An NMP region spans residues 34 to 63 (STGDLLRAEVASGSELGKTIDSFISKGNLV). Residues Thr-35, Arg-40, 61–63 (NLV), 88–91 (GYPR), and Gln-95 contribute to the AMP site. The tract at residues 130-136 (GRNRGTD) is LID. An ATP-binding site is contributed by Arg-131. Positions 133 and 145 each coordinate AMP. Arg-173 provides a ligand contact to ATP.

This sequence belongs to the adenylate kinase family. In terms of assembly, monomer.

It localises to the cytoplasm. It catalyses the reaction AMP + ATP = 2 ADP. The protein operates within purine metabolism; AMP biosynthesis via salvage pathway; AMP from ADP: step 1/1. Functionally, catalyzes the reversible transfer of the terminal phosphate group between ATP and AMP. Plays an important role in cellular energy homeostasis and in adenine nucleotide metabolism. This is Adenylate kinase from Campylobacter jejuni (strain RM1221).